The primary structure comprises 518 residues: Glutamate--cysteine ligase (518 aa).

Belongs to the glutamate--cysteine ligase type 1 family. Type 1 subfamily.

It carries out the reaction L-cysteine + L-glutamate + ATP = gamma-L-glutamyl-L-cysteine + ADP + phosphate + H(+). It participates in sulfur metabolism; glutathione biosynthesis; glutathione from L-cysteine and L-glutamate: step 1/2. This Shigella boydii serotype 18 (strain CDC 3083-94 / BS512) protein is Glutamate--cysteine ligase.